Consider the following 58-residue polypeptide: uncharacterized protein (58 aa).

The helical transmembrane segment at 24–44 (LSVYLGLATTIVCIVLFFTML) threads the bilayer.

It localises to the membrane. This is an uncharacterized protein from Haemophilus influenzae (strain ATCC 51907 / DSM 11121 / KW20 / Rd).